Consider the following 196-residue polypeptide: Putative HTH-type transcriptional regulator protein PtxE (196 aa).

The region spanning 1–59 (MLNPVWLKSLVAIVQTGSFQSAARALGLAQPTVSQHLQKLEEQVGVTLVQRSRSGCQPT) is the HTH lysR-type domain. A DNA-binding region (H-T-H motif) is located at residues 19–38 (FQSAARALGLAQPTVSQHLQ).

It belongs to the LysR transcriptional regulatory family.

The protein is Putative HTH-type transcriptional regulator protein PtxE (ptxE) of Stutzerimonas stutzeri (Pseudomonas stutzeri).